A 404-amino-acid chain; its full sequence is Tryptophan synthase beta chain (404 aa).

The residue at position 98 (Lys-98) is an N6-(pyridoxal phosphate)lysine.

The protein belongs to the TrpB family. In terms of assembly, tetramer of two alpha and two beta chains. Requires pyridoxal 5'-phosphate as cofactor.

The catalysed reaction is (1S,2R)-1-C-(indol-3-yl)glycerol 3-phosphate + L-serine = D-glyceraldehyde 3-phosphate + L-tryptophan + H2O. The protein operates within amino-acid biosynthesis; L-tryptophan biosynthesis; L-tryptophan from chorismate: step 5/5. Functionally, the beta subunit is responsible for the synthesis of L-tryptophan from indole and L-serine. In Rhodopseudomonas palustris (strain HaA2), this protein is Tryptophan synthase beta chain.